A 283-amino-acid polypeptide reads, in one-letter code: Orotidine 5'-phosphate decarboxylase (283 aa).

Catalysis depends on K97, which acts as the Proton donor.

The protein belongs to the OMP decarboxylase family. Type 2 subfamily.

The enzyme catalyses orotidine 5'-phosphate + H(+) = UMP + CO2. The protein operates within pyrimidine metabolism; UMP biosynthesis via de novo pathway; UMP from orotate: step 2/2. In Clostridium botulinum (strain ATCC 19397 / Type A), this protein is Orotidine 5'-phosphate decarboxylase.